The following is a 173-amino-acid chain: Lipoprotein signal peptidase (173 aa).

The next 3 helical transmembrane spans lie at 9 to 29, 37 to 57, and 70 to 90; these read LPFLLTAIVIVVDQVTKILVV, VIPVIGDLVNLRFVYNTGAAF, and ILLVFLPFLLLIALTGAYLKS. Active-site residues include aspartate 124 and aspartate 146. Residues 142–162 form a helical membrane-spanning segment; the sequence is FNAADSFIVCCGIGLGVNLIL.

This sequence belongs to the peptidase A8 family.

The protein localises to the cell inner membrane. The enzyme catalyses Release of signal peptides from bacterial membrane prolipoproteins. Hydrolyzes -Xaa-Yaa-Zaa-|-(S,diacylglyceryl)Cys-, in which Xaa is hydrophobic (preferably Leu), and Yaa (Ala or Ser) and Zaa (Gly or Ala) have small, neutral side chains.. The protein operates within protein modification; lipoprotein biosynthesis (signal peptide cleavage). In terms of biological role, this protein specifically catalyzes the removal of signal peptides from prolipoproteins. The sequence is that of Lipoprotein signal peptidase from Treponema denticola (strain ATCC 35405 / DSM 14222 / CIP 103919 / JCM 8153 / KCTC 15104).